Reading from the N-terminus, the 256-residue chain is Ubiquinone/menaquinone biosynthesis C-methyltransferase UbiE (256 aa).

Over residues 1–19 (MQNRSSSPDSSSAGNTHFG) the composition is skewed to polar residues. The segment at 1-24 (MQNRSSSPDSSSAGNTHFGFQSVP) is disordered. S-adenosyl-L-methionine-binding positions include threonine 81, aspartate 102, and 128 to 129 (DA).

It belongs to the class I-like SAM-binding methyltransferase superfamily. MenG/UbiE family.

It carries out the reaction a 2-demethylmenaquinol + S-adenosyl-L-methionine = a menaquinol + S-adenosyl-L-homocysteine + H(+). The catalysed reaction is a 2-methoxy-6-(all-trans-polyprenyl)benzene-1,4-diol + S-adenosyl-L-methionine = a 5-methoxy-2-methyl-3-(all-trans-polyprenyl)benzene-1,4-diol + S-adenosyl-L-homocysteine + H(+). The protein operates within quinol/quinone metabolism; menaquinone biosynthesis; menaquinol from 1,4-dihydroxy-2-naphthoate: step 2/2. It participates in cofactor biosynthesis; ubiquinone biosynthesis. Its function is as follows. Methyltransferase required for the conversion of demethylmenaquinol (DMKH2) to menaquinol (MKH2) and the conversion of 2-polyprenyl-6-methoxy-1,4-benzoquinol (DDMQH2) to 2-polyprenyl-3-methyl-6-methoxy-1,4-benzoquinol (DMQH2). This is Ubiquinone/menaquinone biosynthesis C-methyltransferase UbiE from Bordetella avium (strain 197N).